Reading from the N-terminus, the 179-residue chain is Inner membrane-spanning protein YciB (179 aa).

The next 5 helical transmembrane spans lie at 22–42, 50–70, 76–96, 121–141, and 149–169; these read IYVA…FTWF, MTLI…VFHN, WKVT…QLVL, LAWA…AFWL, and FKVF…GVYI.

It belongs to the YciB family.

It is found in the cell inner membrane. Its function is as follows. Plays a role in cell envelope biogenesis, maintenance of cell envelope integrity and membrane homeostasis. The chain is Inner membrane-spanning protein YciB from Serratia proteamaculans (strain 568).